The primary structure comprises 843 residues: Ribosome biogenesis protein ERB1 (843 aa).

Disordered stretches follow at residues 36 to 189 (KKAA…RYIY) and 364 to 419 (ADES…REYL). 3 stretches are compositionally biased toward acidic residues: residues 77 to 92 (VDED…YDLE), 106 to 139 (SDSE…EVPS), and 163 to 172 (ESNDLSDDNE). Residues 173–183 (PNYRIEKDANG) are compositionally biased toward basic and acidic residues. The span at 379-396 (PKLPPPGYEESYHPPPEY) shows a compositional bias: pro residues. A compositionally biased stretch (basic and acidic residues) spans 397–406 (LPDKKEKEEW). 6 WD repeats span residues 487–526 (GHRG…QLWS), 530–570 (SDED…LELE), 668–706 (KGGG…LVKI), 709–754 (PGAR…RPYK), 758–797 (YHQK…DLLS), and 813–843 (TGDL…RLWM).

This sequence belongs to the WD repeat BOP1/ERB1 family. As to quaternary structure, component of the NOP7 complex, composed of ERB1, NOP7 and YTM1. The complex is held together by ERB1, which interacts with NOP7 via its N-terminal domain and with YTM1 via a high-affinity interaction between the seven-bladed beta-propeller domains of the 2 proteins. The NOP7 complex associates with the 66S pre-ribosome.

It localises to the nucleus. Its subcellular location is the nucleolus. It is found in the nucleoplasm. In terms of biological role, component of the NOP7 complex, which is required for maturation of the 25S and 5.8S ribosomal RNAs and formation of the 60S ribosome. The protein is Ribosome biogenesis protein ERB1 of Coccidioides immitis (strain RS) (Valley fever fungus).